The following is a 306-amino-acid chain: Glutamyl-Q tRNA(Asp) synthetase (306 aa).

L-glutamate contacts are provided by residues 29–33 (RFAPS) and Asp-65. Positions 32 to 42 (PSPTGPLHLGN) match the 'HIGH' region motif. Zn(2+) is bound by residues Cys-121, Cys-123, Tyr-141, and Cys-145. L-glutamate is bound by residues Tyr-188 and Arg-206. The short motif at 244-248 (KLAKR) is the 'KMSKS' region element. Residue Lys-247 participates in ATP binding.

Belongs to the class-I aminoacyl-tRNA synthetase family. GluQ subfamily. It depends on Zn(2+) as a cofactor.

Catalyzes the tRNA-independent activation of glutamate in presence of ATP and the subsequent transfer of glutamate onto a tRNA(Asp). Glutamate is transferred on the 2-amino-5-(4,5-dihydroxy-2-cyclopenten-1-yl) moiety of the queuosine in the wobble position of the QUC anticodon. The chain is Glutamyl-Q tRNA(Asp) synthetase from Prochlorococcus marinus (strain MIT 9303).